The following is a 95-amino-acid chain: HIG1 domain family member 1A, mitochondrial (95 aa).

Position 2 is an N-acetylserine (S2). Positions 2–93 (STNTDLSLSS…YQEFWANPKP (92 aa)) constitute an HIG1 domain. At S8 the chain carries Phosphoserine. Transmembrane regions (helical) follow at residues 28 to 48 (PFVP…LYKL) and 69 to 89 (GFVV…EFWA).

In terms of assembly, associates with cytochrome c oxidase (COX, complex IV); proposed complex component. Also associates with respiratory chain supercomplexes.

The protein localises to the mitochondrion membrane. Its subcellular location is the mitochondrion inner membrane. In terms of biological role, proposed subunit of cytochrome c oxidase (COX, complex IV), which is the terminal component of the mitochondrial respiratory chain that catalyzes the reduction of oxygen to water. May play a role in the assembly of respiratory supercomplexes. This Mus musculus (Mouse) protein is HIG1 domain family member 1A, mitochondrial (Higd1a).